Consider the following 51-residue polypeptide: U-Asilidin(1)-Eru1a (51 aa).

Positions 1–23 (MANYIDVLSFLAIICATVLATLA) are cleaved as a signal peptide. Intrachain disulfides connect Cys26–Cys40, Cys33–Cys44, and Cys39–Cys49.

This sequence belongs to the asilidin-1 family. Expressed by the venom gland. The most highly expressed peptides U-Asilidin1-Mar1a is around 3000 times higher expressed in the venom thoracic glands compared to its body tissues.

The protein localises to the secreted. Induces neurotoxic effect on honeybees, including slow movements, disorientation and paralysis. Since it provokes similar symptoms than omega-atracotoxin, it is probable that it acts in the same way by inhibiting voltage-gated calcium channels. This chain is U-Asilidin(1)-Eru1a, found in Eutolmus rufibarbis (Golden-tabbed robberfly).